The sequence spans 161 residues: Phosphopantetheine adenylyltransferase (161 aa).

A substrate-binding site is contributed by threonine 10. ATP-binding positions include 10–11 (TF) and histidine 18. Substrate-binding residues include lysine 42, leucine 75, and arginine 89. Residues 90–92 (GLR), glutamate 100, and 125–131 (YSFLSSS) each bind ATP.

The protein belongs to the bacterial CoaD family. Homohexamer. It depends on Mg(2+) as a cofactor.

The protein localises to the cytoplasm. The enzyme catalyses (R)-4'-phosphopantetheine + ATP + H(+) = 3'-dephospho-CoA + diphosphate. Its pathway is cofactor biosynthesis; coenzyme A biosynthesis; CoA from (R)-pantothenate: step 4/5. Reversibly transfers an adenylyl group from ATP to 4'-phosphopantetheine, yielding dephospho-CoA (dPCoA) and pyrophosphate. The protein is Phosphopantetheine adenylyltransferase of Thermodesulfovibrio yellowstonii (strain ATCC 51303 / DSM 11347 / YP87).